The sequence spans 346 residues: Phosphate acyltransferase (346 aa).

It belongs to the PlsX family. Homodimer. Probably interacts with PlsY.

It localises to the cytoplasm. It carries out the reaction a fatty acyl-[ACP] + phosphate = an acyl phosphate + holo-[ACP]. Its pathway is lipid metabolism; phospholipid metabolism. Its function is as follows. Catalyzes the reversible formation of acyl-phosphate (acyl-PO(4)) from acyl-[acyl-carrier-protein] (acyl-ACP). This enzyme utilizes acyl-ACP as fatty acyl donor, but not acyl-CoA. This Brucella ovis (strain ATCC 25840 / 63/290 / NCTC 10512) protein is Phosphate acyltransferase.